A 385-amino-acid polypeptide reads, in one-letter code: tRNA-specific 2-thiouridylase MnmA (385 aa).

ATP contacts are provided by residues G12–S19 and M38. The interval N108–D110 is interaction with target base in tRNA. Catalysis depends on C113, which acts as the Nucleophile. Cysteines 113 and 210 form a disulfide. Residue G138 coordinates ATP. The segment at K160–Q162 is interaction with tRNA. The Cysteine persulfide intermediate role is filled by C210.

Belongs to the MnmA/TRMU family.

Its subcellular location is the cytoplasm. It carries out the reaction S-sulfanyl-L-cysteinyl-[protein] + uridine(34) in tRNA + AH2 + ATP = 2-thiouridine(34) in tRNA + L-cysteinyl-[protein] + A + AMP + diphosphate + H(+). Its function is as follows. Catalyzes the 2-thiolation of uridine at the wobble position (U34) of tRNA, leading to the formation of s(2)U34. This chain is tRNA-specific 2-thiouridylase MnmA, found in Ureaplasma parvum serovar 3 (strain ATCC 27815 / 27 / NCTC 11736).